We begin with the raw amino-acid sequence, 281 residues long: Diaminopimelate epimerase (281 aa).

Positions 13, 46, and 66 each coordinate substrate. Cys75 acts as the Proton donor in catalysis. Substrate is bound by residues 76–77 (GN), Asn160, Asn193, and 211–212 (ER). Cys220 acts as the Proton acceptor in catalysis. 221–222 (GT) serves as a coordination point for substrate.

Belongs to the diaminopimelate epimerase family. In terms of assembly, homodimer.

The protein resides in the cytoplasm. It catalyses the reaction (2S,6S)-2,6-diaminopimelate = meso-2,6-diaminopimelate. Its pathway is amino-acid biosynthesis; L-lysine biosynthesis via DAP pathway; DL-2,6-diaminopimelate from LL-2,6-diaminopimelate: step 1/1. Catalyzes the stereoinversion of LL-2,6-diaminopimelate (L,L-DAP) to meso-diaminopimelate (meso-DAP), a precursor of L-lysine and an essential component of the bacterial peptidoglycan. This chain is Diaminopimelate epimerase, found in Acinetobacter baumannii (strain ATCC 17978 / DSM 105126 / CIP 53.77 / LMG 1025 / NCDC KC755 / 5377).